We begin with the raw amino-acid sequence, 371 residues long: Histidinol-phosphate aminotransferase (371 aa).

Residue Lys221 is modified to N6-(pyridoxal phosphate)lysine.

It belongs to the class-II pyridoxal-phosphate-dependent aminotransferase family. Histidinol-phosphate aminotransferase subfamily. In terms of assembly, homodimer. Pyridoxal 5'-phosphate serves as cofactor.

The catalysed reaction is L-histidinol phosphate + 2-oxoglutarate = 3-(imidazol-4-yl)-2-oxopropyl phosphate + L-glutamate. It participates in amino-acid biosynthesis; L-histidine biosynthesis; L-histidine from 5-phospho-alpha-D-ribose 1-diphosphate: step 7/9. This Pseudoalteromonas atlantica (strain T6c / ATCC BAA-1087) protein is Histidinol-phosphate aminotransferase.